Reading from the N-terminus, the 201-residue chain is Membrane protein UL120 (201 aa).

The N-terminal stretch at 1–25 (MYRAGVTLLVVAVVSFGRWDSVTVA) is a signal peptide. Over 26-170 (TTIRVGWWYE…AYFRRSDHRA (145 aa)) the chain is Extracellular. N-linked (GlcNAc...) asparagine; by host glycans are attached at residues Asn-47, Asn-50, Asn-56, Asn-85, Asn-96, Asn-114, Asn-123, and Asn-138. A helical transmembrane segment spans residues 171–191 (FMIVILTQVVFVVFIINASFI). Over 192–201 (WSWTFRRHKR) the chain is Cytoplasmic.

This sequence belongs to the HHV-5 UL120 protein family.

It is found in the host membrane. In Human cytomegalovirus (strain Merlin) (HHV-5), this protein is Membrane protein UL120 (UL120).